A 164-amino-acid chain; its full sequence is SsrA-binding protein (164 aa).

The protein belongs to the SmpB family.

Its subcellular location is the cytoplasm. Functionally, required for rescue of stalled ribosomes mediated by trans-translation. Binds to transfer-messenger RNA (tmRNA), required for stable association of tmRNA with ribosomes. tmRNA and SmpB together mimic tRNA shape, replacing the anticodon stem-loop with SmpB. tmRNA is encoded by the ssrA gene; the 2 termini fold to resemble tRNA(Ala) and it encodes a 'tag peptide', a short internal open reading frame. During trans-translation Ala-aminoacylated tmRNA acts like a tRNA, entering the A-site of stalled ribosomes, displacing the stalled mRNA. The ribosome then switches to translate the ORF on the tmRNA; the nascent peptide is terminated with the 'tag peptide' encoded by the tmRNA and targeted for degradation. The ribosome is freed to recommence translation, which seems to be the essential function of trans-translation. This chain is SsrA-binding protein, found in Synechococcus sp. (strain CC9311).